The sequence spans 68 residues: Potassium channel toxin epsilon-KTx 1.2 (68 aa).

The N-terminal stretch at 1–26 (MKFSCGFLLIFLVLSAMIATFSEVEA) is a signal peptide. Intrachain disulfides connect cysteine 30/cysteine 38, cysteine 33/cysteine 54, cysteine 37/cysteine 47, and cysteine 42/cysteine 52. A Tyrosine amide modification is found at tyrosine 55. Positions 57–68 (RSDLNEEFENYQ) are excised as a propeptide.

This sequence belongs to the short scorpion toxin superfamily. Potassium channel inhibitor family. Epsilon-KTx 01 subfamily. As to expression, expressed by the venom gland.

It localises to the secreted. In terms of biological role, potassium channel blocker. At 3 uM, this toxin blocks voltage-gated potassium channels rKv1.2/KCNA2 (5%), hKv1.3/KCNA3 (10%),rKv1.4/KCNA4 (20%), Kv11/hERG (24%), and Shaker-IR (27%). The protein is Potassium channel toxin epsilon-KTx 1.2 of Tityus serrulatus (Brazilian scorpion).